The sequence spans 380 residues: Glucose-1-phosphate adenylyltransferase (380 aa).

Residues glycine 164, 179–180 (EK), and serine 190 contribute to the alpha-D-glucose 1-phosphate site.

The protein belongs to the bacterial/plant glucose-1-phosphate adenylyltransferase family. In terms of assembly, homotetramer.

It carries out the reaction alpha-D-glucose 1-phosphate + ATP + H(+) = ADP-alpha-D-glucose + diphosphate. The protein operates within glycan biosynthesis; glycogen biosynthesis. In terms of biological role, involved in the biosynthesis of ADP-glucose, a building block required for the elongation reactions to produce glycogen. Catalyzes the reaction between ATP and alpha-D-glucose 1-phosphate (G1P) to produce pyrophosphate and ADP-Glc. The chain is Glucose-1-phosphate adenylyltransferase from Lacticaseibacillus casei (strain BL23) (Lactobacillus casei).